The sequence spans 1715 residues: Ubiquitin carboxyl-terminal hydrolase 32 (1715 aa).

2 EF-hand domains span residues 161-196 and 197-232; these read IPKNALAGLFNAFDENRDGHIDFKELCCGVSAACRG and PGVERTRFCFKIFDVDRDGVLSHDETLQMINVLLLV. Asp174, Asn176, Asp178, His180, Glu185, Asp210, Asp212, Asp214, and Glu221 together coordinate Ca(2+). The region spanning 314–492 is the DUSP domain; that stretch reads QCKHMENDIV…DNLPLPRQVI (179 aa). The tract at residues 393 to 429 is disordered; the sequence is QHDSYSLGSGTGSASGSGSASSGISAGRHCGPVRPGP. A compositionally biased stretch (low complexity) spans 408–419; that stretch reads GSGSASSGISAG. A USP domain is found at 677–1675; it reads TGLHNLGNTC…AAYLLFYERK (999 aa). Cys686 acts as the Nucleophile in catalysis. 2 stretches are compositionally biased toward polar residues: residues 1103–1126 and 1150–1164; these read TESNTSSMSYTNHSGENSMESSLT and YRTSPNDSSGLSTGH. Disordered regions lie at residues 1103–1213 and 1536–1569; these read TESN…PHKA and DEIDAPSKEVKEELPNQTGSTKATASPPPTGNIL. Positions 1171-1180 are enriched in acidic residues; that stretch reads DVDEQAEEGN. Residues 1188 to 1209 are compositionally biased toward polar residues; it reads DQITTSQPETSSGVYSRRSSQP. Residues 1540 to 1549 are compositionally biased toward basic and acidic residues; that stretch reads APSKEVKEEL. The segment covering 1550–1559 has biased composition (polar residues); that stretch reads PNQTGSTKAT. Residue His1633 is the Proton acceptor of the active site.

It belongs to the peptidase C19 family. USP20/USP33 subfamily.

The enzyme catalyses Thiol-dependent hydrolysis of ester, thioester, amide, peptide and isopeptide bonds formed by the C-terminal Gly of ubiquitin (a 76-residue protein attached to proteins as an intracellular targeting signal).. In terms of biological role, deubiquitinating enzyme that acts as an inhibitor of mitophagy probably by counteracting the action of park. Possibly functions by hydrolyzing ubiquitin attached by park on target proteins, thereby reducing park's ability to drive mitophagy. The chain is Ubiquitin carboxyl-terminal hydrolase 32 from Drosophila melanogaster (Fruit fly).